The sequence spans 566 residues: Intracellular exo-alpha-(1-&gt;5)-L-arabinofuranosidase (566 aa).

The span at 1–12 (MTTHNSQYSAET) shows a compositional bias: polar residues. Residues 1–39 (MTTHNSQYSAETTHPDKQESSPAPTAAGTTASNVSTTGN) form a disordered region. The segment covering 20 to 32 (SSPAPTAAGTTAS) has biased composition (low complexity). Residues Glu69, Asn114, and Asn214 each coordinate alpha-L-arabinofuranose. Glu215 (proton donor/acceptor) is an active-site residue. The alpha-L-arabinofuranose site is built by Tyr286, Glu340, and Gln409. Residue Glu340 is the Nucleophile of the active site.

The protein belongs to the glycosyl hydrolase 51 family. Homohexamer; trimer of dimers.

The protein localises to the cytoplasm. The catalysed reaction is Hydrolysis of terminal non-reducing alpha-L-arabinofuranoside residues in alpha-L-arabinosides.. Its pathway is glycan metabolism; L-arabinan degradation. Its activity is regulated as follows. Completely inhibited by Hg(2+) and Cu(2+) ions, whereas 1 mM Zn(2+) inhibited activity by 51%. Involved in the degradation of arabinan and is a key enzyme in the complete degradation of the plant cell wall. Catalyzes the cleavage of terminal alpha-(1-&gt;5)-arabinofuranosyl bonds in different hemicellulosic homopolysaccharides (branched and debranched arabinans). It is active with sugar beet arabinan and wheat arabinoxylan. It also exhibited activity against alpha-(1-&gt;5)-linked arabinobiose, arabinotriose, arabinotetraose, and arabinopentaose. In Bifidobacterium longum, this protein is Intracellular exo-alpha-(1-&gt;5)-L-arabinofuranosidase (abfB).